The chain runs to 109 residues: UPF0060 membrane protein PA3275 (109 aa).

4 helical membrane passes run 5-25 (FWFV…YLWL), 27-47 (LGKS…FALL), 59-79 (AYAA…AFVE), and 84-104 (LWSD…VLFG).

Belongs to the UPF0060 family.

Its subcellular location is the cell inner membrane. This is UPF0060 membrane protein PA3275 from Pseudomonas aeruginosa (strain ATCC 15692 / DSM 22644 / CIP 104116 / JCM 14847 / LMG 12228 / 1C / PRS 101 / PAO1).